The sequence spans 180 residues: ATP-dependent protease subunit HslV (180 aa).

The active site involves T6. 3 residues coordinate Na(+): G162, C165, and T168.

It belongs to the peptidase T1B family. HslV subfamily. A double ring-shaped homohexamer of HslV is capped on each side by a ring-shaped HslU homohexamer. The assembly of the HslU/HslV complex is dependent on binding of ATP.

The protein resides in the cytoplasm. The catalysed reaction is ATP-dependent cleavage of peptide bonds with broad specificity.. Its activity is regulated as follows. Allosterically activated by HslU binding. Protease subunit of a proteasome-like degradation complex believed to be a general protein degrading machinery. This is ATP-dependent protease subunit HslV from Oleidesulfovibrio alaskensis (strain ATCC BAA-1058 / DSM 17464 / G20) (Desulfovibrio alaskensis).